The chain runs to 470 residues: Outer capsid protein sigma-1 (470 aa).

The segment at 1–324 is tail; that stretch reads MDASLITEIR…LELDTANNRV (324 aa). N-linked (GlcNAc...) asparagine; by host glycosylation occurs at asparagine 21. A coiled-coil region spans residues 26 to 46; sequence KEIEEIKKQVQVNVDDIRAAN. 3 N-linked (GlcNAc...) asparagine; by host glycosylation sites follow: asparagine 121, asparagine 205, and asparagine 353. Residues 325–470 form a head region; that stretch reads QVADRFGMRT…WTIMYPCNVR (146 aa).

This sequence belongs to the orthoreovirus sigma-1 protein family. Homotrimer. Interacts (via the head region) with human F11R. In terms of processing, undergoes dramatic conformational rearrangements during viral disassembly in the endocytic pathway.

Its subcellular location is the virion. Fiber-like molecule that attaches the virion to the host cell membrane by binding to the primary receptor F11R/JAM-A and to sialic acid containing proteins (coreceptor). The interaction of sigma-1 with F11R is required for NF-kB activation and apoptosis. Binding to both sialic acid and F11R is required to induce maximal levels of apoptosis. This is Outer capsid protein sigma-1 (S1) from Reovirus type 1 (strain Lang) (T1L).